The chain runs to 198 residues: FMN-dependent NADH:quinone oxidoreductase (198 aa).

Residues Ser-10, 16 to 18, 94 to 97, and 138 to 141 each bind FMN; these read SQS, MYNF, and TRGG.

The protein belongs to the azoreductase type 1 family. As to quaternary structure, homodimer. It depends on FMN as a cofactor.

It catalyses the reaction 2 a quinone + NADH + H(+) = 2 a 1,4-benzosemiquinone + NAD(+). The catalysed reaction is N,N-dimethyl-1,4-phenylenediamine + anthranilate + 2 NAD(+) = 2-(4-dimethylaminophenyl)diazenylbenzoate + 2 NADH + 2 H(+). Quinone reductase that provides resistance to thiol-specific stress caused by electrophilic quinones. Its function is as follows. Also exhibits azoreductase activity. Catalyzes the reductive cleavage of the azo bond in aromatic azo compounds to the corresponding amines. This chain is FMN-dependent NADH:quinone oxidoreductase, found in Shewanella oneidensis (strain ATCC 700550 / JCM 31522 / CIP 106686 / LMG 19005 / NCIMB 14063 / MR-1).